The primary structure comprises 386 residues: GTPase Obg (386 aa).

The Obg domain occupies 4-162; that stretch reads SNFVDYVKIY…RTVILQLKLL (159 aa). Residues 18 to 44 are disordered; that stretch reads KGGRGSSHFRREKYIPKGGPDGGDGGR. An OBG-type G domain is found at 163-329; the sequence is ADVGLVGFPN…LKDLLWKELN (167 aa). Residues 169–176, 194–198, 216–219, 283–286, and 310–312 each bind GTP; these read GFPNAGKS, FTTLE, DIPG, TKSD, and SSI. Residues serine 176 and threonine 196 each contribute to the Mg(2+) site. A disordered region spans residues 357-386; it reads YIFPVDEDEDDPDEEYEEYWDDDEDEDTRK.

It belongs to the TRAFAC class OBG-HflX-like GTPase superfamily. OBG GTPase family. In terms of assembly, monomer. It depends on Mg(2+) as a cofactor.

Its subcellular location is the cytoplasm. An essential GTPase which binds GTP, GDP and possibly (p)ppGpp with moderate affinity, with high nucleotide exchange rates and a fairly low GTP hydrolysis rate. Plays a role in control of the cell cycle, stress response, ribosome biogenesis and in those bacteria that undergo differentiation, in morphogenesis control. In Parabacteroides distasonis (strain ATCC 8503 / DSM 20701 / CIP 104284 / JCM 5825 / NCTC 11152), this protein is GTPase Obg.